Here is a 158-residue protein sequence, read N- to C-terminus: Protein BTG2 (158 aa).

Residue S147 is modified to Phosphoserine; by MAPK1 and MAPK3. S149 is subject to Phosphoserine; by MAPK14.

The protein belongs to the BTG family. In terms of assembly, interacts with PRKCABP. Interacts with CNOT7 and CNOT8; indicative for an association with the CCR4-NOT complex. Interacts with PIN1, inducing mitochondrial depolarization. Post-translationally, phosphorylated at Ser-147 by MAPK1/ERK2 and MAPK3/ERK1, and at Ser-149 by MAPK14, leading to PIN1-binding and mitochondrial depolarization.

Functionally, anti-proliferative protein; the function is mediated by association with deadenylase subunits of the CCR4-NOT complex. Activates mRNA deadenylation in a CNOT6 and CNOT7-dependent manner. In vitro can inhibit deadenylase activity of CNOT7 and CNOT8. Involved in cell cycle regulation. Could be involved in the growth arrest and differentiation of the neuronal precursors. Modulates transcription regulation mediated by ESR1. Involved in mitochondrial depolarization and neurite outgrowth. The chain is Protein BTG2 (BTG2) from Homo sapiens (Human).